The chain runs to 120 residues: Holo-[acyl-carrier-protein] synthase (120 aa).

2 residues coordinate Mg(2+): aspartate 8 and glutamate 58.

It belongs to the P-Pant transferase superfamily. AcpS family. Mg(2+) is required as a cofactor.

It is found in the cytoplasm. The catalysed reaction is apo-[ACP] + CoA = holo-[ACP] + adenosine 3',5'-bisphosphate + H(+). Transfers the 4'-phosphopantetheine moiety from coenzyme A to a Ser of acyl-carrier-protein. The sequence is that of Holo-[acyl-carrier-protein] synthase from Streptococcus sanguinis (strain SK36).